The following is a 586-amino-acid chain: MPFALHGIPVSRGVAIGRAHLLAPAALDVSHYLVDEDQLDAEVERLRAARAAVRAELAALKRDLPRDAPEELGAFLDVHAMILDDEALAREPEALIRGRRYNAEWALTTRLEELMRQFDEIEDEYLRERKTDIRQVVERILKALAGAPVLVPAPVPALAADGEAATGVIVVAHDIAPADMLQFRHTVFHGFVTDMGGRTSHTAIVARSLDIPAAVGVQSASELIRQDDWIIIDGDAGLVIVDPTAIILEEYRHRQSERALEKKRLQRLRHTPAVTLDGLEIDLLANIEMAEDAGAALAAGAVGVGLFRSEFLFMNRRDELPGEDEQFQAYRGAVDAMHGLPVTIRTIDIGADKPLDARGDEFETALNPALGLRAIRWSLSEPGMFLTQLRALLRASAFGPVRLLVPMLAHASEIDQTLALIAKAKRQLDERGEAYDPGMKVGAMIEIPAAVLLLPLFLRKMDFLSIGTNDLIQYTLAIDRADNAVAHLFDPLHPAVLQLVARTIREANRAGVPVAVCGEMAGDPSMTRLLLGMGLREFSMHPAQLLRVKQEILHAHCERLEPLVDQVLQAFDPEEQAAALRQLARP.

H201 functions as the Tele-phosphohistidine intermediate in the catalytic mechanism. Phosphoenolpyruvate-binding residues include R308 and R345. Positions 446 and 470 each coordinate Mg(2+). Phosphoenolpyruvate is bound by residues 469 to 470 (ND) and R480. Residue C517 is the Proton donor of the active site.

It belongs to the PEP-utilizing enzyme family. In terms of assembly, homodimer. Mg(2+) serves as cofactor.

It localises to the cytoplasm. The catalysed reaction is L-histidyl-[protein] + phosphoenolpyruvate = N(pros)-phospho-L-histidyl-[protein] + pyruvate. In terms of biological role, general (non sugar-specific) component of the phosphoenolpyruvate-dependent sugar phosphotransferase system (sugar PTS). This major carbohydrate active-transport system catalyzes the phosphorylation of incoming sugar substrates concomitantly with their translocation across the cell membrane. Enzyme I transfers the phosphoryl group from phosphoenolpyruvate (PEP) to the phosphoryl carrier protein (HPr). This Cupriavidus necator (strain ATCC 17699 / DSM 428 / KCTC 22496 / NCIMB 10442 / H16 / Stanier 337) (Ralstonia eutropha) protein is Phosphoenolpyruvate-protein phosphotransferase.